The primary structure comprises 126 residues: Histone H2B type 1-M (126 aa).

The disordered stretch occupies residues 1–36; it reads MPEPVKSAPVPKKGSKKAINKAQKKDGKKRKRSRKE. Proline 2 is subject to N-acetylproline. Glutamate 3 bears the ADP-ribosyl glutamic acid mark. Position 6 is an N6-(2-hydroxyisobutyryl)lysine; alternate (lysine 6). Lysine 6 is subject to N6-(beta-hydroxybutyryl)lysine; alternate. Lysine 6 is modified (N6-acetyllysine; alternate). An N6-butyryllysine; alternate modification is found at lysine 6. Lysine 6 is subject to N6-crotonyllysine; alternate. N6-lactoyllysine; alternate is present on lysine 6. Lysine 6 participates in a covalent cross-link: Glycyl lysine isopeptide (Lys-Gly) (interchain with G-Cter in SUMO2); alternate. ADP-ribosylserine is present on serine 7. Residue lysine 12 is modified to N6-(beta-hydroxybutyryl)lysine; alternate. N6-acetyllysine; alternate is present on residues lysine 12 and lysine 13. Residues lysine 12 and lysine 13 each carry the N6-crotonyllysine; alternate modification. The residue at position 12 (lysine 12) is an N6-lactoyllysine; alternate. Lysine 13 is modified (N6-(2-hydroxyisobutyryl)lysine; alternate). Serine 15 bears the Phosphoserine; by STK4/MST1 mark. Lysine 16, lysine 17, lysine 21, and lysine 24 each carry N6-acetyllysine; alternate. 4 positions are modified to N6-crotonyllysine; alternate: lysine 16, lysine 17, lysine 21, and lysine 24. 4 positions are modified to N6-lactoyllysine; alternate: lysine 16, lysine 17, lysine 21, and lysine 24. N6-(beta-hydroxybutyryl)lysine; alternate is present on residues lysine 17 and lysine 21. Lysine 17 bears the N6-glutaryllysine; alternate mark. An N6-(2-hydroxyisobutyryl)lysine; alternate mark is found at lysine 21 and lysine 24. An N6-butyryllysine; alternate modification is found at lysine 21. Residue lysine 21 forms a Glycyl lysine isopeptide (Lys-Gly) (interchain with G-Cter in SUMO2); alternate linkage. Lysine 25 carries the N6-(2-hydroxyisobutyryl)lysine modification. N6-(2-hydroxyisobutyryl)lysine; alternate is present on lysine 35. Residue lysine 35 is modified to N6-(beta-hydroxybutyryl)lysine; alternate. N6-crotonyllysine; alternate is present on lysine 35. At lysine 35 the chain carries N6-glutaryllysine; alternate. N6-succinyllysine; alternate is present on lysine 35. Residue lysine 35 forms a Glycyl lysine isopeptide (Lys-Gly) (interchain with G-Cter in ubiquitin); alternate linkage. Glutamate 36 carries the polyADP-ribosyl glutamic acid modification. Serine 37 carries the post-translational modification Phosphoserine; by AMPK. Residues lysine 44, lysine 47, and lysine 58 each carry the N6-(2-hydroxyisobutyryl)lysine; alternate modification. Residue lysine 44 is modified to N6-lactoyllysine; alternate. N6-glutaryllysine; alternate occurs at positions 44 and 47. Lysine 47 carries the N6-methyllysine; alternate modification. Lysine 58 carries the post-translational modification N6,N6-dimethyllysine; alternate. Arginine 80 bears the Dimethylated arginine mark. Lysine 86 carries the post-translational modification N6-(2-hydroxyisobutyryl)lysine; alternate. Position 86 is an N6-(beta-hydroxybutyryl)lysine; alternate (lysine 86). Lysine 86 is subject to N6-acetyllysine; alternate. Lysine 86 carries the post-translational modification N6-lactoyllysine; alternate. Residue lysine 86 is modified to N6,N6,N6-trimethyllysine; alternate. An omega-N-methylarginine mark is found at arginine 87 and arginine 93. Lysine 109 carries the post-translational modification N6-(2-hydroxyisobutyryl)lysine; alternate. An N6-lactoyllysine; alternate modification is found at lysine 109. Residue lysine 109 is modified to N6-glutaryllysine; alternate. The residue at position 109 (lysine 109) is an N6-methyllysine; alternate. The O-linked (GlcNAc) serine glycan is linked to serine 113. Threonine 116 bears the Phosphothreonine mark. Lysine 117 and lysine 121 each carry N6-(2-hydroxyisobutyryl)lysine; alternate. Residues lysine 117 and lysine 121 each carry the N6-(beta-hydroxybutyryl)lysine; alternate modification. N6-lactoyllysine; alternate is present on residues lysine 117 and lysine 121. Residues lysine 117 and lysine 121 each carry the N6-glutaryllysine; alternate modification. N6-succinyllysine; alternate is present on residues lysine 117 and lysine 121. Lysine 117 is subject to N6-malonyllysine; alternate. Lysine 117 carries the N6-methylated lysine; alternate modification. Lysine 121 is covalently cross-linked (Glycyl lysine isopeptide (Lys-Gly) (interchain with G-Cter in ubiquitin); alternate).

It belongs to the histone H2B family. As to quaternary structure, the nucleosome is a histone octamer containing two molecules each of H2A, H2B, H3 and H4 assembled in one H3-H4 heterotetramer and two H2A-H2B heterodimers. The octamer wraps approximately 147 bp of DNA. In terms of processing, monoubiquitination at Lys-35 (H2BK34Ub) by the MSL1/MSL2 dimer is required for histone H3 'Lys-4' (H3K4me) and 'Lys-79' (H3K79me) methylation and transcription activation at specific gene loci, such as HOXA9 and MEIS1 loci. Similarly, monoubiquitination at Lys-121 (H2BK120Ub) by the RNF20/40 complex gives a specific tag for epigenetic transcriptional activation and is also prerequisite for histone H3 'Lys-4' and 'Lys-79' methylation. It also functions cooperatively with the FACT dimer to stimulate elongation by RNA polymerase II. H2BK120Ub also acts as a regulator of mRNA splicing: deubiquitination by USP49 is required for efficient cotranscriptional splicing of a large set of exons. Phosphorylation at Ser-37 (H2BS36ph) by AMPK in response to stress promotes transcription. Phosphorylated on Ser-15 (H2BS14ph) by STK4/MST1 during apoptosis; which facilitates apoptotic chromatin condensation. Also phosphorylated on Ser-15 in response to DNA double strand breaks (DSBs), and in correlation with somatic hypermutation and immunoglobulin class-switch recombination. Post-translationally, glcNAcylation at Ser-113 promotes monoubiquitination of Lys-121. It fluctuates in response to extracellular glucose, and associates with transcribed genes. In terms of processing, ADP-ribosylated by PARP1 or PARP2 on Ser-7 (H2BS6ADPr) in response to DNA damage. H2BS6ADPr promotes recruitment of CHD1L. Mono-ADP-ribosylated on Glu-3 (H2BE2ADPr) by PARP3 in response to single-strand breaks. Poly ADP-ribosylation on Glu-36 (H2BE35ADPr) by PARP1 regulates adipogenesis: it inhibits phosphorylation at Ser-37 (H2BS36ph), thereby blocking expression of pro-adipogenetic genes. Crotonylation (Kcr) is specifically present in male germ cells and marks testis-specific genes in post-meiotic cells, including X-linked genes that escape sex chromosome inactivation in haploid cells. Crotonylation marks active promoters and enhancers and confers resistance to transcriptional repressors. It is also associated with post-meiotically activated genes on autosomes. Post-translationally, lactylated in macrophages by EP300/P300 by using lactoyl-CoA directly derived from endogenous or exogenous lactate, leading to stimulates gene transcription.

It is found in the nucleus. It localises to the chromosome. Functionally, core component of nucleosome. Nucleosomes wrap and compact DNA into chromatin, limiting DNA accessibility to the cellular machineries which require DNA as a template. Histones thereby play a central role in transcription regulation, DNA repair, DNA replication and chromosomal stability. DNA accessibility is regulated via a complex set of post-translational modifications of histones, also called histone code, and nucleosome remodeling. The chain is Histone H2B type 1-M from Homo sapiens (Human).